We begin with the raw amino-acid sequence, 193 residues long: 3-isopropylmalate dehydratase small subunit (193 aa).

This sequence belongs to the LeuD family. LeuD type 1 subfamily. Heterodimer of LeuC and LeuD.

The enzyme catalyses (2R,3S)-3-isopropylmalate = (2S)-2-isopropylmalate. It participates in amino-acid biosynthesis; L-leucine biosynthesis; L-leucine from 3-methyl-2-oxobutanoate: step 2/4. In terms of biological role, catalyzes the isomerization between 2-isopropylmalate and 3-isopropylmalate, via the formation of 2-isopropylmaleate. This chain is 3-isopropylmalate dehydratase small subunit, found in Bacillus cereus (strain ATCC 10987 / NRS 248).